A 350-amino-acid chain; its full sequence is Ferrochelatase (350 aa).

The Fe cation site is built by His-220 and Glu-301.

The protein belongs to the ferrochelatase family.

It localises to the cytoplasm. It carries out the reaction heme b + 2 H(+) = protoporphyrin IX + Fe(2+). It functions in the pathway porphyrin-containing compound metabolism; protoheme biosynthesis; protoheme from protoporphyrin-IX: step 1/1. Its function is as follows. Catalyzes the ferrous insertion into protoporphyrin IX. The sequence is that of Ferrochelatase from Brucella anthropi (strain ATCC 49188 / DSM 6882 / CCUG 24695 / JCM 21032 / LMG 3331 / NBRC 15819 / NCTC 12168 / Alc 37) (Ochrobactrum anthropi).